Reading from the N-terminus, the 126-residue chain is Late histone H2A.3, gonadal (126 aa).

Residues 1–18 (MSGRGKGAKAKGKAKSRS) show a composition bias toward basic residues. The segment at 1-21 (MSGRGKGAKAKGKAKSRSSRA) is disordered. An N-acetylserine modification is found at Ser2. Ser2 carries the phosphoserine modification. At Gln104 the chain carries N5-methylglutamine. Lys119 is covalently cross-linked (Glycyl lysine isopeptide (Lys-Gly) (interchain with G-Cter in ubiquitin)).

It belongs to the histone H2A family. The nucleosome is a histone octamer containing two molecules each of H2A, H2B, H3 and H4 assembled in one H3-H4 heterotetramer and two H2A-H2B heterodimers. The octamer wraps approximately 147 bp of DNA. Monoubiquitination of Lys-119 gives a specific tag for epigenetic transcriptional repression. Post-translationally, phosphorylation of Ser-2 directly represses transcription.

The protein resides in the nucleus. The protein localises to the chromosome. Core component of nucleosome. Nucleosomes wrap and compact DNA into chromatin, limiting DNA accessibility to the cellular machineries which require DNA as a template. Histones thereby play a central role in transcription regulation, DNA repair, DNA replication and chromosomal stability. DNA accessibility is regulated via a complex set of post-translational modifications of histones, also called histone code, and nucleosome remodeling. This chain is Late histone H2A.3, gonadal, found in Psammechinus miliaris (Green sea urchin).